Here is an 87-residue protein sequence, read N- to C-terminus: UPF0250 protein PC1_1177 (87 aa).

It belongs to the UPF0250 family.

In Pectobacterium carotovorum subsp. carotovorum (strain PC1), this protein is UPF0250 protein PC1_1177.